We begin with the raw amino-acid sequence, 508 residues long: MAP kinase kinase MKK1/SSP32 (508 aa).

3 disordered regions span residues 1 to 21, 35 to 95, and 130 to 158; these read MASLFRPPESAKCNPNSPRLK, IYLT…LSIN, and ELSGNSDLTPSSMASPFSHTNTSSPYLRN. The segment covering 35-47 has biased composition (polar residues); sequence IYLTSNGSSTTAY. Over residues 48 to 66 the composition is skewed to low complexity; the sequence is SSHTPEPLTSSTSTLFSQT. Polar residues-rich tracts occupy residues 67-79 and 131-158; these read RLHPSDSSMTLNT and LSGNSDLTPSSMASPFSHTNTSSPYLRN. The residue at position 192 (Ser-192) is a Phosphoserine. Residues 221 to 488 form the Protein kinase domain; it reads IETLGILGEG…PRQMINHPWI (268 aa). Residues 227-235 and Lys-250 contribute to the ATP site; that span reads LGEGAGGSV. Residue Asp-349 is the Proton acceptor of the active site.

This sequence belongs to the protein kinase superfamily. STE Ser/Thr protein kinase family. MAP kinase kinase subfamily.

It catalyses the reaction L-seryl-[protein] + ATP = O-phospho-L-seryl-[protein] + ADP + H(+). The catalysed reaction is L-threonyl-[protein] + ATP = O-phospho-L-threonyl-[protein] + ADP + H(+). The enzyme catalyses L-tyrosyl-[protein] + ATP = O-phospho-L-tyrosyl-[protein] + ADP + H(+). Involved in a signal transduction pathway that play a role in yeast cell morphogenesis and cell growth. This pathway seems to start by SMP3; then involve the kinase PKC1 that may act on the BCK1 kinase that then phosphorylates MKK1 and MKK2 which themselves phosphorylate the MPK1 kinase. This is MAP kinase kinase MKK1/SSP32 (MKK1) from Saccharomyces cerevisiae (strain ATCC 204508 / S288c) (Baker's yeast).